The primary structure comprises 522 residues: Tyrosine-protein phosphatase 1 (522 aa).

The interval 32–63 (RSNSSISLSSSSHSSFSRMGSLGSLPTNSGSS) is disordered. Low complexity predominate over residues 33–63 (SNSSISLSSSSHSSFSRMGSLGSLPTNSGSS). The region spanning 97–471 (IKEEFRLLEE…LFCYKTILDE (375 aa)) is the Tyrosine-protein phosphatase domain. The active-site Phosphocysteine intermediate is C310. Residues 327 to 426 (MKKLDHYFKQ…DDAAESDLKY (100 aa)) form a PTPase insert (Asn-rich) region. Positions 382–410 (NNNNNNNLNNNNNINNNSNGSNNTPQTEP) are enriched in low complexity. Residues 382–420 (NNNNNNNLNNNNNINNNSNGSNNTPQTEPNNEEDDDDAA) are disordered. Over residues 411 to 420 (NNEEDDDDAA) the composition is skewed to acidic residues.

The protein belongs to the protein-tyrosine phosphatase family. Non-receptor class subfamily. As to expression, expressed predominantly in anterior-like cells and to a lesser degree in prestalk cells.

Its subcellular location is the cytoplasm. It is found in the cell membrane. It carries out the reaction O-phospho-L-tyrosyl-[protein] + H2O = L-tyrosyl-[protein] + phosphate. Its function is as follows. May have a role in growth and in the early stages of development. Affects the timing of development. This chain is Tyrosine-protein phosphatase 1 (ptpA1-1), found in Dictyostelium discoideum (Social amoeba).